A 565-amino-acid chain; its full sequence is NAD-dependent malic enzyme (565 aa).

The active-site Proton donor is the Tyr-104. Arg-157 provides a ligand contact to NAD(+). Lys-175 functions as the Proton acceptor in the catalytic mechanism. Glu-246, Asp-247, and Asp-270 together coordinate a divalent metal cation. NAD(+)-binding residues include Asp-270 and Asn-418.

Belongs to the malic enzymes family. As to quaternary structure, homotetramer. Mg(2+) serves as cofactor. The cofactor is Mn(2+).

The enzyme catalyses (S)-malate + NAD(+) = pyruvate + CO2 + NADH. The catalysed reaction is oxaloacetate + H(+) = pyruvate + CO2. The polypeptide is NAD-dependent malic enzyme (Erwinia tasmaniensis (strain DSM 17950 / CFBP 7177 / CIP 109463 / NCPPB 4357 / Et1/99)).